The following is a 213-amino-acid chain: General transcription factor 3C polypeptide 6 (213 aa).

Positions 1 to 11 (MAAAADERSPE) are enriched in basic and acidic residues. Disordered stretches follow at residues 1–20 (MAAAADERSPEDGEDEEEEE) and 191–213 (SGPLIDIPSETEGSVFMETQMLP). A2 is subject to N-acetylalanine. S9 is modified (phosphoserine).

It belongs to the TFIIIC subunit 6 family. Part of the TFIIIC subcomplex TFIIIC2, consisting of six subunits, GTF3C1, GTF3C2, GTF3C3, GTF3C4, GTF3C5 and GTF3C6. Interacts with GTF3C4 and GTF3C5.

The protein resides in the nucleus. Its function is as follows. Involved in RNA polymerase III-mediated transcription. Integral, tightly associated component of the DNA-binding TFIIIC2 subcomplex that directly binds tRNA and virus-associated RNA promoters. The chain is General transcription factor 3C polypeptide 6 (GTF3C6) from Homo sapiens (Human).